We begin with the raw amino-acid sequence, 205 residues long: Glycerol-3-phosphate acyltransferase (205 aa).

At 1–3 the chain is on the periplasmic side; sequence MSA. A helical membrane pass occupies residues 4 to 24; the sequence is IAPGMILFAYLCGSISSAILV. Residues 25–52 are Cytoplasmic-facing; it reads CRIAGLPDPRESGSGNPGATNVLRIGGK. The helical transmembrane segment at 53 to 73 threads the bilayer; the sequence is GAAVAVLIFDILKGMLPVWGA. Topologically, residues 74 to 80 are periplasmic; sequence YALGVTP. A helical transmembrane segment spans residues 81 to 101; the sequence is FWLGLIAIAACLGHIWPVFFG. Topologically, residues 102–111 are cytoplasmic; the sequence is FKGGKGVATA. A helical membrane pass occupies residues 112-132; the sequence is FGAIAPIGWDLTGVMAGTWLL. At 133–137 the chain is on the periplasmic side; sequence TVLLS. Residues 138–158 form a helical membrane-spanning segment; sequence GYSSLGAIVSALIAPFYVWWF. Over 159–205 the chain is Cytoplasmic; the sequence is KPQFTFPVSMLSCLILLRHHDNIQRLWRRQETKIWTKLKKKRQKDSE.

This sequence belongs to the PlsY family. Probably interacts with PlsX.

The protein localises to the cell inner membrane. It catalyses the reaction sn-glycerol 3-phosphate + an acyl-CoA = a 1-acyl-sn-glycero-3-phosphate + CoA. It carries out the reaction a fatty acyl-[ACP] + sn-glycerol 3-phosphate = a 1-acyl-sn-glycero-3-phosphate + holo-[ACP]. It functions in the pathway lipid metabolism; phospholipid metabolism. Its function is as follows. Catalyzes the transfer of an acyl group from acyl-ACP to glycerol-3-phosphate (G3P) to form lysophosphatidic acid (LPA). This enzyme can also utilize acyl-CoA as fatty acyl donor, but not acyl-PO(4). The chain is Glycerol-3-phosphate acyltransferase from Salmonella schwarzengrund (strain CVM19633).